The primary structure comprises 606 residues: WD repeat-containing protein 1 (606 aa).

13 WD repeats span residues 4-45 (EIKK…LRNI), 48-87 (PAVA…IWDT), 93-135 (ILKY…LWDT), 138-176 (SVGE…FFEG), 180-218 (KFKF…IYDG), 224-263 (VCAL…IWDV), 270-306 (STFP…YLDK), 311-351 (KPLR…YWDS), 358-408 (SFSG…KLDV), 432-474 (LKDQ…VYSI), 480-518 (KDEG…VFSV), 523-561 (SENN…VWTL), and 566-604 (TKVK…EWTI). 4 positions are modified to N6-acetyllysine: Lys28, Lys81, Lys95, and Lys115. The residue at position 238 (Tyr238) is a Phosphotyrosine. The residue at position 480 (Lys480) is an N6-acetyllysine.

Belongs to the WD repeat AIP1 family.

The protein localises to the cytoplasm. It localises to the cytoskeleton. It is found in the cell projection. The protein resides in the podosome. Functionally, induces disassembly of actin filaments in conjunction with ADF/cofilin family proteins. Enhances cofilin-mediated actin severing. Involved in cytokinesis. Involved in chemotactic cell migration by restricting lamellipodial membrane protrusions. Involved in myocardium sarcomere organization. Required for cardiomyocyte growth and maintenance. Involved in megakaryocyte maturation and platelet shedding. Required for the establishment of planar cell polarity (PCP) during follicular epithelium development and for cell shape changes during PCP; the function seems to implicate cooperation with CFL1 and/or DSTN/ADF. Involved in the generation/maintenance of cortical tension. Involved in assembly and maintenance of epithelial apical cell junctions and plays a role in the organization of the perijunctional actomyosin belt. The polypeptide is WD repeat-containing protein 1 (Wdr1) (Rattus norvegicus (Rat)).